A 491-amino-acid chain; its full sequence is Synaptotagmin-9 (491 aa).

The Vesicular portion of the chain corresponds to 1-52 (MPGARDALCHQALQLLAELCARGALEHDSCQDFIYHLRDRARPRLRDPDISV). The segment at 9 to 31 (CHQALQLLAELCARGALEHDSCQ) is cysteine motif. Residues 53–73 (SLLTLVVTACGLALFGVSLFV) traverse the membrane as a helical segment. The Cytoplasmic portion of the chain corresponds to 74–491 (SWKLCWVPWR…AHWHSLLEKR (418 aa)). Positions 91–104 (SKDNNQEPLNYTDT) are enriched in polar residues. Residues 91–147 (SKDNNQEPLNYTDTETNEQENSEDFLDPPTPCPDSSMKISHTSPDIPLSTQPGGQDN) are disordered. A compositionally biased stretch (acidic residues) spans 105–116 (ETNEQENSEDFL). Residues 127–144 (MKISHTSPDIPLSTQPGG) are compositionally biased toward polar residues. Ser-177 carries the phosphoserine modification. 2 C2 domains span residues 220–341 (ACGK…ILWK) and 352–485 (DLGE…AHWH). Ca(2+)-binding residues include Asp-251, Asp-257, Asp-309, Phe-310, Asp-311, Ser-314, Asp-317, Asp-383, Asp-389, Asp-443, and Asp-445.

The protein belongs to the synaptotagmin family. Homodimer; disulfide-linked via the cysteine motif. Can also form heterodimers with SYT3, SYT6, SYT7 and SYT10. It depends on Ca(2+) as a cofactor.

Its subcellular location is the cytoplasmic vesicle. It localises to the secretory vesicle. The protein localises to the synaptic vesicle membrane. May be involved in Ca(2+)-dependent exocytosis of secretory vesicles through Ca(2+) and phospholipid binding to the C2 domain or may serve as Ca(2+) sensors in the process of vesicular trafficking and exocytosis. This Rattus norvegicus (Rat) protein is Synaptotagmin-9 (Syt9).